A 202-amino-acid chain; its full sequence is Small ribosomal subunit protein uS4 (202 aa).

The region spanning 93–156 is the S4 RNA-binding domain; sequence RRLDNMVYRL…KDLKIISEAV (64 aa).

It belongs to the universal ribosomal protein uS4 family. Part of the 30S ribosomal subunit. Contacts protein S5. The interaction surface between S4 and S5 is involved in control of translational fidelity.

One of the primary rRNA binding proteins, it binds directly to 16S rRNA where it nucleates assembly of the body of the 30S subunit. Its function is as follows. With S5 and S12 plays an important role in translational accuracy. This is Small ribosomal subunit protein uS4 from Pediococcus pentosaceus (strain ATCC 25745 / CCUG 21536 / LMG 10740 / 183-1w).